Reading from the N-terminus, the 163-residue chain is Adenosine 5'-monophosphoramidase HINT2 (163 aa).

The transit peptide at 1-17 directs the protein to the mitochondrion; that stretch reads MAAAVVLAAGLRAARRA. Residues 55-163 enclose the HIT domain; sequence IFSRILDKSL…GGRQLQWPPG (109 aa). AMP-binding residues include S63 and D80. An N6-acetyllysine modification is found at K119. N136 serves as a coordination point for AMP. K139 bears the N6-acetyllysine mark. AMP contacts are provided by residues 142–145 and 149–151; these read AQSV and HIH. The Histidine triad motif motif lies at 147-151; that stretch reads HLHIH. H149 serves as the catalytic Tele-AMP-histidine intermediate.

The protein belongs to the HINT family. High expression in liver and pancreas. Expression is significantly down-regulated in hepatocellular carcinoma (HCC) patients.

The protein localises to the mitochondrion. The catalysed reaction is adenosine 5'-phosphoramidate + H2O = AMP + NH4(+). In terms of biological role, exhibits adenosine 5'-monophosphoramidase activity, hydrolyzing purine nucleotide phosphoramidates with a single phosphate group such as adenosine 5'monophosphoramidate (AMP-NH2) to yield AMP and NH2. Hydrolyzes adenosine 5'-O-p-nitrophenylphosphoramidate (AMP-pNA). Hydrolyzes fluorogenic purine nucleoside tryptamine phosphoramidates in vitro. May be involved in steroid biosynthesis. May play a role in apoptosis. The chain is Adenosine 5'-monophosphoramidase HINT2 from Homo sapiens (Human).